An 887-amino-acid polypeptide reads, in one-letter code: Semaphorin-6B (887 aa).

The first 26 residues, 1–26, serve as a signal peptide directing secretion; that stretch reads MWTPRAPPPRPALLFLLLLLLRVTHG. At 27 to 605 the chain is on the extracellular side; the sequence is LFPDEPPPLS…VSVNLLVTSS (579 aa). A Sema domain is found at 32–525; it reads PPPLSVAPRD…FPRCVVRVPV (494 aa). N-linked (GlcNAc...) asparagine glycosylation occurs at N75. Disulfide bonds link C117–C127 and C145–C154. N-linked (GlcNAc...) asparagine glycosylation is found at N156, N168, and N292. Cystine bridges form between C268–C379 and C293–C338. 3 N-linked (GlcNAc...) asparagine glycosylation sites follow: N387, N442, and N463. 4 cysteine pairs are disulfide-bonded: C487-C519, C528-C546, C534-C580, and C538-C554. A helical transmembrane segment spans residues 606 to 626; that stretch reads VAAFVVGAVVSGFSVGWFVGL. The Cytoplasmic segment spans residues 627 to 887; that stretch reads RERRELARRK…TGERTAPPVP (261 aa). Disordered regions lie at residues 656-675, 697-717, and 759-887; these read LGERRGTGTGGRGGAGGGPG, HGGPHDLDSGLLPTPEQTPLP, and APEQ…PPVP. Residues 662 to 674 show a composition bias toward gly residues; sequence TGTGGRGGAGGGP. The residue at position 667 (R667) is an Omega-N-methylarginine. Residues 707-717 show a composition bias toward low complexity; sequence LLPTPEQTPLP.

Belongs to the semaphorin family.

The protein resides in the cell membrane. In terms of biological role, functions as a cell surface repellent for mossy fibers of developing neurons in the hippocampus where it plays a role in axon guidance. May function through the PLXNA4 receptor expressed by mossy cell axons. The sequence is that of Semaphorin-6B (Sema6b) from Rattus norvegicus (Rat).